The chain runs to 402 residues: Rubredoxin-oxygen oxidoreductase (402 aa).

The segment at 30-216 (PMGTTYNAYL…KAIETLVGAG (187 aa)) is zinc metallo-hydrolase. Fe cation contacts are provided by His79, Glu81, Asp83, His146, Asp165, and His226. The region spanning 255–393 (VVIFYDSMWH…QLKTMAQTIA (139 aa)) is the Flavodoxin-like domain.

This sequence in the N-terminal section; belongs to the zinc metallo-hydrolase group 3 family. In terms of assembly, homodimer. It depends on FMN as a cofactor. The cofactor is Fe cation.

It functions in the pathway energy metabolism; electron transfer. Its function is as follows. Catalyzes the four-electron reduction of one oxygen molecule to two water molecules. In Megalodesulfovibrio gigas (strain ATCC 19364 / DSM 1382 / NCIMB 9332 / VKM B-1759) (Desulfovibrio gigas), this protein is Rubredoxin-oxygen oxidoreductase (roo).